The primary structure comprises 155 residues: Cytochrome c-type biogenesis protein CcmE (155 aa).

Topologically, residues 1-7 are cytoplasmic; sequence MTRKQKR. Residues 8-28 traverse the membrane as a helical; Signal-anchor for type II membrane protein segment; sequence LVVIAGGMSFILAAVLLVMFA. At 29–155 the chain is on the periplasmic side; the sequence is FSQSVAYFYM…GKGQEAKATP (127 aa). Positions 124 and 128 each coordinate heme.

Belongs to the CcmE/CycJ family.

Its subcellular location is the cell inner membrane. In terms of biological role, heme chaperone required for the biogenesis of c-type cytochromes. Transiently binds heme delivered by CcmC and transfers the heme to apo-cytochromes in a process facilitated by CcmF and CcmH. The chain is Cytochrome c-type biogenesis protein CcmE from Rhizobium etli (strain ATCC 51251 / DSM 11541 / JCM 21823 / NBRC 15573 / CFN 42).